We begin with the raw amino-acid sequence, 344 residues long: Protein RecA (344 aa).

Gly65–Thr72 contributes to the ATP binding site. The segment covering Glu323 to Ala337 has biased composition (basic and acidic residues). Residues Glu323–Glu344 form a disordered region.

This sequence belongs to the RecA family.

The protein localises to the cytoplasm. Can catalyze the hydrolysis of ATP in the presence of single-stranded DNA, the ATP-dependent uptake of single-stranded DNA by duplex DNA, and the ATP-dependent hybridization of homologous single-stranded DNAs. It interacts with LexA causing its activation and leading to its autocatalytic cleavage. The chain is Protein RecA from Xanthomonas axonopodis pv. citri (strain 306).